The sequence spans 304 residues: Transmembrane protein 178A (304 aa).

A signal peptide spans Met-1–Ala-25. The Extracellular portion of the chain corresponds to Ile-26–Gly-186. Asn-165 carries an N-linked (GlcNAc...) asparagine glycan. The helical transmembrane segment at Phe-187–Phe-207 threads the bilayer. Residues Trp-208 to His-215 are Cytoplasmic-facing. A helical membrane pass occupies residues Val-216–Ala-236. At Ala-237–Cys-267 the chain is on the extracellular side. The chain crosses the membrane as a helical span at residues Ala-268–Ile-288. Over Ser-289–Val-304 the chain is Cytoplasmic.

It belongs to the TMEM178 family.

Its subcellular location is the endoplasmic reticulum membrane. Its function is as follows. May act as a negative regulator of osteoclast differentiation. In Xenopus laevis (African clawed frog), this protein is Transmembrane protein 178A (tmem178a).